A 305-amino-acid chain; its full sequence is Transmembrane protein 74 (305 aa).

Phosphoserine is present on S11. A compositionally biased stretch (polar residues) spans 122–132; that stretch reads QRSQRSPSAKG. Residues 122 to 143 form a disordered region; it reads QRSQRSPSAKGSNHPVDLGWGN. 2 helical membrane-spanning segments follow: residues 178 to 198 and 232 to 252; these read FISA…SYIV and VIAG…LLMM.

The protein belongs to the TMEM74 family.

The protein localises to the lysosome membrane. It is found in the cytoplasmic vesicle. The protein resides in the autophagosome membrane. Its function is as follows. Plays an essential role in autophagy. TMEM74-induced autophagy may involve PI3K signal transduction. This Mus musculus (Mouse) protein is Transmembrane protein 74 (Tmem74).